We begin with the raw amino-acid sequence, 369 residues long: GTPase Obg (369 aa).

An Obg domain is found at Met1–Leu159. A disordered region spans residues Leu128–Gly147. Residues Ala160–Ala334 enclose the OBG-type G domain. GTP is bound by residues Gly166–Ser173, Phe191–Ala195, Asp213–Gly216, Asn284–Asp287, and Ser315–Leu317. Ser173 and Thr193 together coordinate Mg(2+).

Belongs to the TRAFAC class OBG-HflX-like GTPase superfamily. OBG GTPase family. Monomer. The cofactor is Mg(2+).

Its subcellular location is the cytoplasm. Its function is as follows. An essential GTPase which binds GTP, GDP and possibly (p)ppGpp with moderate affinity, with high nucleotide exchange rates and a fairly low GTP hydrolysis rate. Plays a role in control of the cell cycle, stress response, ribosome biogenesis and in those bacteria that undergo differentiation, in morphogenesis control. The sequence is that of GTPase Obg from Burkholderia multivorans (strain ATCC 17616 / 249).